Reading from the N-terminus, the 141-residue chain is MAKKLVAVVKLAIQAGKATPAPPIGPALGQHGVNIMAFCKEYNAKTADQAGMVVPVEISIYEDRSFTFVLKTPPASVLIKKALGIESGSSEPHKVKVGSLTRAQLRQIAEQKLPDLNARDVEAAMKIIAGTARSMGVTIVD.

It belongs to the universal ribosomal protein uL11 family. As to quaternary structure, part of the ribosomal stalk of the 50S ribosomal subunit. Interacts with L10 and the large rRNA to form the base of the stalk. L10 forms an elongated spine to which L12 dimers bind in a sequential fashion forming a multimeric L10(L12)X complex. Post-translationally, one or more lysine residues are methylated.

In terms of biological role, forms part of the ribosomal stalk which helps the ribosome interact with GTP-bound translation factors. This Synechococcus sp. (strain JA-3-3Ab) (Cyanobacteria bacterium Yellowstone A-Prime) protein is Large ribosomal subunit protein uL11.